Reading from the N-terminus, the 131-residue chain is Histone H2B (131 aa).

A compositionally biased stretch (basic and acidic residues) spans 1-19 (MAPKAEKKPASKAPAEKKP). The segment at 1-38 (MAPKAEKKPASKAPAEKKPAAKKTASSTDGGKKRTKAR) is disordered. N6-acetyllysine; alternate is present on residues lysine 7 and lysine 8. Glycyl lysine isopeptide (Lys-Gly) (interchain with G-Cter in SUMO); alternate cross-links involve residues lysine 7 and lysine 8. Serine 11 carries the phosphoserine modification. Position 12 is an N6-acetyllysine (lysine 12). N6-acetyllysine; alternate is present on lysine 17. Lysine 17 is covalently cross-linked (Glycyl lysine isopeptide (Lys-Gly) (interchain with G-Cter in SUMO); alternate). Residue lysine 18 forms a Glycyl lysine isopeptide (Lys-Gly) (interchain with G-Cter in SUMO) linkage. Lysine 125 participates in a covalent cross-link: Glycyl lysine isopeptide (Lys-Gly) (interchain with G-Cter in ubiquitin).

Belongs to the histone H2B family. As to quaternary structure, the nucleosome is a histone octamer containing two molecules each of H2A, H2B, H3 and H4 assembled in one H3-H4 heterotetramer and two H2A-H2B heterodimers. The octamer wraps approximately 147 bp of DNA. Post-translationally, monoubiquitinated by the UBC2-BRE1 complex to form H2BK123ub1. H2BK123ub1 gives a specific tag for epigenetic transcriptional activation and is also prerequisite for H3K4me and H3K79me formation. H2BK123ub1 also modulates the formation of double-strand breaks during meiosis and is a prerequisite for DNA-damage checkpoint activation. In terms of processing, phosphorylated by STE20 to form H2BS10ph during progression through meiotic prophase. May be correlated with chromosome condensation. Acetylated by GCN5 to form H2BK11ac and H2BK16ac. H2BK16ac can also be formed by ESA1. Acetylation of N-terminal lysines and particularly formation of H2BK11acK16ac has a positive effect on transcription. Post-translationally, sumoylation to form H2BK6su or H2BK7su, and probably also H2BK16su or H2BK17su, occurs preferentially near the telomeres and represses gene transcription.

It is found in the nucleus. Its subcellular location is the chromosome. In terms of biological role, core component of nucleosome. Nucleosomes wrap and compact DNA into chromatin, limiting DNA accessibility to the cellular machineries which require DNA as a template. Histones thereby play a central role in transcription regulation, DNA repair, DNA replication and chromosomal stability. DNA accessibility is regulated via a complex set of post-translational modifications of histones, also called histone code, and nucleosome remodeling. This is Histone H2B (HTB1) from Lodderomyces elongisporus (strain ATCC 11503 / CBS 2605 / JCM 1781 / NBRC 1676 / NRRL YB-4239) (Yeast).